A 173-amino-acid polypeptide reads, in one-letter code: Translation initiation factor IF-3 (173 aa).

Belongs to the IF-3 family. As to quaternary structure, monomer.

It localises to the cytoplasm. Functionally, IF-3 binds to the 30S ribosomal subunit and shifts the equilibrium between 70S ribosomes and their 50S and 30S subunits in favor of the free subunits, thus enhancing the availability of 30S subunits on which protein synthesis initiation begins. The polypeptide is Translation initiation factor IF-3 (Lactiplantibacillus plantarum (strain ATCC BAA-793 / NCIMB 8826 / WCFS1) (Lactobacillus plantarum)).